The primary structure comprises 251 residues: Eukaryotic translation initiation factor 4E-3 (251 aa).

Positions 200–251 (DSSARTSSTVKPRICLPAKDPAPVKEKGPAATTSPSNPGTEATGTSPATPTP) are disordered. The segment covering 230 to 251 (ATTSPSNPGTEATGTSPATPTP) has biased composition (polar residues).

This sequence belongs to the eukaryotic initiation factor 4E family. As to quaternary structure, eIF4F is a multi-subunit complex, the composition of which varies with external and internal environmental conditions. It is composed of at least eIF4A, eIF4E and eIF4G. eIF4E is also known to interact with other partners. Interacts with mxt. Component of the pid-1 variant of the PETISCO complex (also called the pid-3, erh-2, tofu-6, and ife-3 small RNA complex) containing at least pid-1, tofu-6, ife-3, pid-3, and erh-2, which is required for the biogenesis of a class of 21 nucleotide PIWI-interacting RNAs (piRNAs) that possess a uracil residue at the 5'-end (also called 21U-RNAs). Component of the tost-1 variant of the PETISCO complex (also called the pid-3, erh-2, tofu-6, and ife-3 small RNA complex) containing at least tost-1, tofu-6, ife-3, pid-3, and erh-2, which plays an essential role in embryogenesis. Within the pid-1 and tost-1 variants of the PETISCO complexes interacts with tofu-6 (via C-terminus). In contrast to the pid-1 variant of the PETISCO complex, the tost-1 variant of the PETISCO complex plays a minor role in the biogenesis of 21U-RNAs. As to expression, highly expressed in the germline (at protein level).

The protein resides in the cytoplasmic granule. Its subcellular location is the cytoplasm. The protein localises to the perinuclear region. Functionally, recognizes and binds the 7-methylguanosine-containing mRNA cap during an early step in the initiation of protein synthesis and facilitates ribosome binding by inducing the unwinding of the mRNAs secondary structures. All 5 eIF4E proteins bind monomethyl cap structures. Only ife-1, ife-2 and ife-5 bind trimethyl cap structures which result from trans-splicing. Translation of trimethyl cap structure mRNAs may be regulated by intracellular redox state; disulfide bonds change the width and depth of the cap-binding cavity determining selectivity to mRNA caps. Ife-3 is essential for viability. Component of the pid-1 and tost-1 variants of the PETISCO complexes, which have roles in the biogenesis of a class of 21 nucleotide PIWI-interacting RNAs (piRNAs) that possess a uracil residue at the 5'-end (also called 21U-RNAs) and embryogenesis, respectively. Within the pid-1 variant of the PETISCO complex binds to capped 21U-RNA precursor molecules, possibly playing a role in the processing of the 5' end of the molecules to promote binding of other complex components such as pid-3. However, it is not essential for the biogenesis of 21U-RNAs by itself. Within the tost-1 variant of the PETISCO complex binds to splice leader SL1 RNA fragments to possibly play a role in their processing. The sequence is that of Eukaryotic translation initiation factor 4E-3 from Caenorhabditis elegans.